The chain runs to 828 residues: Calpain-A (828 aa).

The EF-hand 1 domain maps to 1–14; sequence MDDLRGFLRQAGQE. In terms of domain architecture, Calpain catalytic spans 88–387; that stretch reads LFEDPLFPAS…FDRVEICNLS (300 aa). Catalysis depends on residues cysteine 143, histidine 299, and asparagine 327. The segment at 388-557 is domain III; it reads PDSLTEDQQN…TQNNMEENDD (170 aa). Residues 558–577 are linker; sequence HVGYGGKADTITPGFPTPKP. The interval 578 to 828 is domain IV; sequence IDPQKEGLRR…EEWIERTIYS (251 aa). 4 EF-hand domains span residues 579-614, 699-734, 729-764, and 764-799; these read DPQK…SMRD, FSKD…IAKW, SEIA…AGYH, and HLNN…IKTY. Aspartate 712, aspartate 714, serine 716, lysine 718, glutamate 723, aspartate 742, threonine 746, arginine 748, and glutamine 753 together coordinate Ca(2+).

Belongs to the peptidase C2 family. In terms of processing, undergoes calcium-dependent autolytic cleavage between Lys-54 and Asn-55, which is necessary for activation of the protein. In terms of tissue distribution, localized to the anterior and posterior embryonic poles just after fertilization. Becomes distributed around the polar buds and just below the pole cells of the posterior pole during cleavage cycles. During these nuclear divisions anterior localization disappears. Localized to actin caps that underlie the plasma membrane, immediately above each nucleus at cleavage cycles 8 and 9. Localized to a small set of nerve, midgut and blood cells in adults.

It localises to the cytoplasm. With respect to regulation, activated by millimolar concentrations of calcium, and by phosphatidylinositol 4,5-diphosphate, phosphatidylinositol 4-monophosphate, phosphatidylinositol and phosphatidic acid. Calcium-regulated non-lysosomal thiol-protease. Involved in the organization of the actin-related cytoskeleton during embryogenesis. The chain is Calpain-A (CalpA) from Drosophila melanogaster (Fruit fly).